The sequence spans 94 residues: Small ribosomal subunit protein uS19 (94 aa).

This sequence belongs to the universal ribosomal protein uS19 family.

Functionally, protein S19 forms a complex with S13 that binds strongly to the 16S ribosomal RNA. This chain is Small ribosomal subunit protein uS19, found in Anaplasma phagocytophilum (strain HZ).